Here is a 129-residue protein sequence, read N- to C-terminus: Large ribosomal subunit protein uL22 (129 aa).

It belongs to the universal ribosomal protein uL22 family. As to quaternary structure, part of the 50S ribosomal subunit.

Functionally, this protein binds specifically to 23S rRNA; its binding is stimulated by other ribosomal proteins, e.g. L4, L17, and L20. It is important during the early stages of 50S assembly. It makes multiple contacts with different domains of the 23S rRNA in the assembled 50S subunit and ribosome. Its function is as follows. The globular domain of the protein is located near the polypeptide exit tunnel on the outside of the subunit, while an extended beta-hairpin is found that lines the wall of the exit tunnel in the center of the 70S ribosome. This is Large ribosomal subunit protein uL22 from Brucella abortus (strain 2308).